Consider the following 180-residue polypeptide: Large ribosomal subunit protein uL6 (180 aa).

It belongs to the universal ribosomal protein uL6 family. Part of the 50S ribosomal subunit.

In terms of biological role, this protein binds to the 23S rRNA, and is important in its secondary structure. It is located near the subunit interface in the base of the L7/L12 stalk, and near the tRNA binding site of the peptidyltransferase center. This is Large ribosomal subunit protein uL6 from Desulforapulum autotrophicum (strain ATCC 43914 / DSM 3382 / VKM B-1955 / HRM2) (Desulfobacterium autotrophicum).